The following is a 632-amino-acid chain: Chaperone protein DnaK (632 aa).

Residue Thr-198 is modified to Phosphothreonine; by autocatalysis.

The protein belongs to the heat shock protein 70 family.

Functionally, acts as a chaperone. The protein is Chaperone protein DnaK of Rhodopseudomonas palustris (strain BisB18).